Here is a 450-residue protein sequence, read N- to C-terminus: UDP-N-acetylmuramoylalanine--D-glutamate ligase (450 aa).

119-125 is an ATP binding site; the sequence is GSNGKTT.

The protein belongs to the MurCDEF family.

The protein resides in the cytoplasm. It catalyses the reaction UDP-N-acetyl-alpha-D-muramoyl-L-alanine + D-glutamate + ATP = UDP-N-acetyl-alpha-D-muramoyl-L-alanyl-D-glutamate + ADP + phosphate + H(+). It participates in cell wall biogenesis; peptidoglycan biosynthesis. Cell wall formation. Catalyzes the addition of glutamate to the nucleotide precursor UDP-N-acetylmuramoyl-L-alanine (UMA). The chain is UDP-N-acetylmuramoylalanine--D-glutamate ligase from Bacillus cereus (strain Q1).